Here is an 818-residue protein sequence, read N- to C-terminus: Sodium/hydrogen exchanger 1 (818 aa).

Residues 1 to 98 (MLLWPGASGL…FPVLGIDYQH (98 aa)) are Extracellular-facing. The segment at 44 to 76 (STIRGSEPPRERSIGDVTTAPPELAPESRPVNH) is disordered. Residue Asn75 is glycosylated (N-linked (GlcNAc...) asparagine). A helical transmembrane segment spans residues 99–121 (VRIPFEIALWILLACLMKIGFHV). The Cytoplasmic portion of the chain corresponds to 122-130 (IPTISSIVP). A helical membrane pass occupies residues 131–148 (ESCLLIVVGLLVGGLIKG). Residues 149–158 (VGETPPILQS) are Extracellular-facing. Residues 159 to 176 (EVFFLFLLPPIILDAGYF) traverse the membrane as a helical segment. The Cytoplasmic segment spans residues 177–186 (LPLRQFTENL). Residues 187-215 (GTILIFAVVGTLWNAFFLGGLMYAVCLVG) traverse the membrane as a helical segment. At 216–222 (GEQINNI) the chain is on the extracellular side. The helical transmembrane segment at 223–249 (GLLENLLFGSIISAVDPVAVLAVFEEI) threads the bilayer. Residues 250–252 (HIN) lie on the Cytoplasmic side of the membrane. A helical membrane pass occupies residues 253–283 (ELLHILVFGESLLNDAVTVVLYHLFEEFANY). The Extracellular segment spans residues 284 to 287 (DRVG). Residues 288–322 (IVDIILGFLSFFVVSLGGVFVGVVYGVIAAFTSRF) form a helical membrane-spanning segment. Topologically, residues 323–328 (TSHIRV) are cytoplasmic. Residues 329–341 (IEPLFVFLYSYMA) form a helical membrane-spanning segment. Topologically, residues 342-350 (YLSAELFHL) are extracellular. The helical transmembrane segment at 351 to 371 (SGIMALIASGVVMRPYVEANI) threads the bilayer. The Cytoplasmic portion of the chain corresponds to 372-373 (SH). Residues 374–404 (KSHTTIKYFLKMWSSVSETLIFIFLGVSTVA) form a helical membrane-spanning segment. Over 405–410 (GSHHWN) the chain is Extracellular. Residues 411 to 438 (WTFVISTLLFCLIARVLGVLGLTWFINK) form a helical membrane-spanning segment. The Cytoplasmic portion of the chain corresponds to 439–444 (FRIVKL). The helical transmembrane segment at 445-469 (TPKDQFIIAYGGLRGAIAFSLGYLL) threads the bilayer. Residues 470–475 (DKKHFP) are Extracellular-facing. A helical transmembrane segment spans residues 476 to 505 (MCDLFLTAIITVIFFTVFVQGMTIRPLVDL). The interval 503 to 545 (VDLLAVKKKQETKRSINEEIHTQFLDHLLTGIEDICGHYGHHH) is interaction with TESC. Residues 506-818 (LAVKKKQETK…EGEPFIPKGQ (313 aa)) are Cytoplasmic-facing. The PI(4,5)P2-binding region stretch occupies residues 509–516 (KKKQETKR). The segment at 515 to 545 (KRSINEEIHTQFLDHLLTGIEDICGHYGHHH) is interaction with CHP2. Positions 540–545 (HYGHHH) are confers pH-dependent PI(4,5)P2 binding. Residues 552 to 560 (RFNKKYVKK) form a PI(4,5)P2-binding region region. Residues Ser599 and Ser602 each carry the phosphoserine modification. Thr603 bears the Phosphothreonine mark. A phosphoserine mark is found at Ser605 and Ser648. Residues 633–818 (KILRNNLQKT…EGEPFIPKGQ (186 aa)) are interaction with TESC. Residues 633–818 (KILRNNLQKT…EGEPFIPKGQ (186 aa)) are interaction with CALM1. An interaction with PPP3CA region spans residues 684–687 (LTVP). 3 positions are modified to phosphoserine: Ser693, Ser697, and Ser703. The tract at residues 715–720 (PVITID) is interaction with PPP3CA. Phosphoserine is present on residues Ser723, Ser726, and Ser729. A disordered region spans residues 741-818 (VLGLSRDPGR…EGEPFIPKGQ (78 aa)). Residue Thr782 is modified to Phosphothreonine. The span at 785 to 794 (PSDSPSSQRI) shows a compositional bias: polar residues. 3 positions are modified to phosphoserine: Ser788, Ser790, and Ser799.

The protein belongs to the monovalent cation:proton antiporter 1 (CPA1) transporter (TC 2.A.36) family. As to quaternary structure, homodimer; dimerization is crucial for its function. Oligomer. Interacts with CALM in a calcium-dependent manner. Interacts with TESC. Interacts (via the juxtamembrane region of the cytoplasmic C-terminal domain) with CHP1; the interaction occurs at the plasma membrane in a calcium-dependent manner. Interacts with CHP2; the interaction occurs in a calcium-dependent manner. Interacts with EZR; regulates the cytoskeletal interactions of SLC9A1 and promotes stress fiber formation. In terms of processing, ubiquitinated, leading to its degradation by the proteasome. Ubiquitination is reduced by CHP1. O-glycosylated. Post-translationally, palmitoylated; may play a major role in SLC9A1 regulation. In terms of processing, phosphorylation at Thr-782 increases SLC9A1 activity. Specifically dephosphorylated at Thr-782 by PPP3CA that negatively regulates SLC9A1 activity. Phosphorylation at Ser-648 by AKT1 reduces SLC9A1 binding to CALM1.

It localises to the cell membrane. The protein localises to the basolateral cell membrane. It catalyses the reaction Na(+)(in) + H(+)(out) = Na(+)(out) + H(+)(in). It carries out the reaction Li(+)(out) + H(+)(in) = Li(+)(in) + H(+)(out). The catalysed reaction is Li(+)(in) + Na(+)(out) = Li(+)(out) + Na(+)(in). Its activity is regulated as follows. Activated at acidic pHs. Inhibited by amiloride and 5-amino-substituted derivatives. Inhibited by cariporide and eniporide. Phosphatidylinositol 4,5-bisphosphate (PI(4,5)P2) and phosphatidylinositol 3,4,5-trisphosphate (PI(3,4,5)P3) bind and differentially regulate SLC9A1 activity. Its function is as follows. Electroneutral Na(+) /H(+) antiporter that extrudes Na(+) in exchange for external protons driven by the inward sodium ion chemical gradient, protecting cells from acidification that occurs from metabolism. Exchanges intracellular H(+) ions for extracellular Na(+) in 1:1 stoichiometry. Plays a key role in maintening intracellular pH neutral and cell volume, and thus is important for cell growth, proliferation, migration and survival. In addition, can transport lithium Li(+) and also functions as a Na(+)/Li(+) antiporter. SLC9A1 also functions in membrane anchoring and organization of scaffolding complexes that coordinate signaling inputs. The sequence is that of Sodium/hydrogen exchanger 1 (SLC9A1) from Bos taurus (Bovine).